We begin with the raw amino-acid sequence, 1233 residues long: NACHT, LRR and PYD domains-containing protein 1b allele 1 (1233 aa).

The tract at residues 1–22 (MEESPPKQKSNTKVAQHEGQQD) is disordered. The 310-residue stretch at 126–435 (QLVIIEGAAG…EFFAAISCIL (310 aa)) folds into the NACHT domain. 132 to 139 (GAAGIGKS) serves as a coordination point for ATP. 2 LRR repeats span residues 627–647 (NLEGLDLSGNSLRYSVVQSLC) and 684–704 (SLTELYLQLNDLGDDGVRMLC). A ZU5 region spans residues 850-983 (FWGPIGPVAT…GYTVLKNPSF (134 aa)). The FIIND domain maps to 850 to 1133 (FWGPIGPVAT…LRPALPRIAQ (284 aa)). Positions 984–1133 (SPMGVVLRII…LRPALPRIAQ (150 aa)) are UPA. Residues 1143–1226 (HFMDQHREQL…HLVMDLLEKS (84 aa)) enclose the CARD domain.

Belongs to the NLRP family. As to quaternary structure, interacts with DPP9; leading to inhibit activation of the inflammasome. DPP9 acts via formation of a ternary complex, composed of a DPP9 homodimer, one full-length Nlrp1b protein, and one cleaved C-terminus of Nlrp1b (NACHT, LRR and PYD domains-containing protein 1b, C-terminus). Interacts with DPP8; leading to inhibit activation of the inflammasome, probably via formation of a ternary complex with DPP8. Interacts (via LRR repeats) with BCL2 and BCL2L1 (via the loop between motifs BH4 and BH3). Interacts with NOD2; this interaction may increase IL1B release. Interacts with EIF2AK2/PKR; this interaction requires EIF2AK2 activity, is accompanied by EIF2AK2 autophosphorylation and promotes inflammasome assembly in response to B.anthracis lethal toxin. Interacts with MEFV; this interaction targets Nlrp1b to degradation by autophagy, hence preventing excessive IL1B- and IL18-mediated inflammation. In terms of assembly, interacts with the C-terminal part of Nlrp1b (NACHT, LRR and PYD domains-containing protein 1b, C-terminus) in absence of pathogens and other damage-associated signals. Interacts with the N-terminal part of Nlrp1b (NACHT, LRR and PYD domains-containing protein 1b, N-terminus) in absence of pathogens and other damage-associated signals. Homomultimer; forms the Nlrp1b inflammasome polymeric complex, a filament composed of homopolymers of this form in response to pathogens and other damage-associated signals. The Nlrp1b inflammasome polymeric complex directly recruits pro-caspase-1 (proCASP1) independently of PYCARD/ASC. Interacts (via CARD domain) with CASP1 (via CARD domain); leading to CASP1 activation. In terms of processing, autocatalytically cleaved. Autocatalytic cleavage in FIIND region occurs constitutively, prior to activation signals, and is required for inflammasome activity (IL1B release), possibly by facilitating CASP1 binding. Both N- and C-terminal parts remain associated non-covalently. Post-translationally, ubiquitinated by UBR2, a component of the N-end rule pathway in response to pathogens and other damage-associated signals, leading to its degradation by the proteasome and subsequent release of the cleaved C-terminal part of the protein (NACHT, LRR and PYD domains-containing protein 1b, C-terminus), which polymerizes and forms the Nlrp1b inflammasome. (Microbial infection) Cleavage by B.anthracis lethal toxin (LT) endopeptidase promotes ubiquitination and degradation of the N-terminal part, releasing the cleaved C-terminal part of the protein (NACHT, LRR and PYD domains-containing protein 1b, C-terminus), which polymerizes and forms the Nlrp1b inflammasome. In terms of processing, (Microbial infection) Ubiquitinated by S.flexneri IpaH7.8, leading to its degradation by the proteasome and subsequent release of the cleaved C-terminal part of the protein (NACHT, LRR and PYD domains-containing protein 1b, C-terminus), which polymerizes and forms the Nlrp1b inflammasome. Widely expressed, including in macrophages.

The protein localises to the cytoplasm. It localises to the cytosol. Its subcellular location is the membrane. The protein resides in the inflammasome. Its activity is regulated as follows. Activated by cleavage by B.anthracis lethal toxin (LT) endopeptidase: cleavage by LT promotes ubiquitination and degradation of the N-terminal part, releasing the cleaved C-terminal part of the protein (NACHT, LRR and PYD domains-containing protein 1b, C-terminus), which polymerizes and forms the Nlrp1b inflammasome. Activated by S.flexneri IpaH7.8, an E3 ubiquitin ligase that mediates ubiquitination and degradation of the N-terminal part, releasing the cleaved C-terminal part of the protein, which polymerizes and forms the Nlrp1b inflammasome. Nlrp1b inflammasome is inhibited by DPP8 and DPP9, which sequester the C-terminal fragment of Nlrp1b (NACHT, LRR and PYD domains-containing protein 1b, C-terminus) in a ternary complex, thereby preventing Nlrp1b oligomerization and activation. Nlrp1b inflammasome is activated by Val-boroPro (Talabostat, PT-100), an inhibitor of dipeptidyl peptidases DPP8 and DPP9. Val-boroPro relieves inhibition of DPP8 and/or DPP9 by promoting disruption of the ternary complex, releasing its C-terminal part from autoinhibition. Activated by metabolic inhibitors, such as 2-deoxy-D-glucose and sodium azide, by nutrient deprivation and hypoxia, possibly due to a decrease in cytosolic ATP. Also activated by Toxoplasma gondii. Not activated by muramyl dipeptide, nor by full-length bacterial peptidoglycan. Contrary to its human ortholog, not activated by positive-strand RNA virus such as Semliki Forrest virus or long dsRNA. Its function is as follows. Acts as the sensor component of the Nlrp1b inflammasome, which mediates inflammasome activation in response to various pathogen-associated signals, leading to subsequent pyroptosis. Inflammasomes are supramolecular complexes that assemble in the cytosol in response to pathogens and other damage-associated signals and play critical roles in innate immunity and inflammation. Acts as a recognition receptor (PRR): recognizes specific pathogens and other damage-associated signals, such as B.anthracis lethal toxin (LT) or Val-boroPro inhibitor, and mediates the formation of the inflammasome polymeric complex. In response to pathogen-associated signals, the N-terminal part of Nlrp1b is degraded by the proteasome, releasing the cleaved C-terminal part of the protein (NACHT, LRR and PYD domains-containing protein 1b, C-terminus), which polymerizes to initiate the formation of the inflammasome complex: the inflammasome directly recruits pro-caspase-1 (proCASP1) independently of PYCARD/ASC and promotes caspase-1 (CASP1) activation, which subsequently cleaves and activates inflammatory cytokines IL1B and IL18 and gasdermin-D (GSDMD), leading to pyroptosis. In the absence of GSDMD expression, the Nlrp1b inflammasome is able to recruit and activate CASP8, leading to activation of gasdermin-E (GSDME). Activation of Nlrp1b inflammasome is also required for HMGB1 secretion; the active cytokines and HMGB1 stimulate inflammatory responses. Primary mediator of macrophage susceptibility to B.anthracis LT: in response to B.anthracis infection, macrophages and dendritic cells release IL1B and undergo pyroptosis. This early inflammatory response to the toxin increases resistance to infection by B.anthracis spores. Functionally, constitutes the precursor of the Nlrp1b inflammasome, which mediates autoproteolytic processing within the FIIND domain to generate the N-terminal and C-terminal parts, which are associated non-covalently in absence of pathogens and other damage-associated signals. In terms of biological role, regulatory part that prevents formation of the Nlrp1b inflammasome: in absence of pathogens and other damage-associated signals, interacts with the C-terminal part of Nlrp1b (NACHT, LRR and PYD domains-containing protein 1b, C-terminus), preventing activation of the Nlrp1b inflammasome. In response to pathogen-associated signals, this part is ubiquitinated by the N-end rule pathway and degraded by the proteasome, releasing the cleaved C-terminal part of the protein, which polymerizes and forms the Nlrp1b inflammasome. Constitutes the active part of the Nlrp1b inflammasome. In absence of pathogens and other damage-associated signals, interacts with the N-terminal part of Nlrp1b (NACHT, LRR and PYD domains-containing protein 1b, N-terminus), preventing activation of the Nlrp1b inflammasome. In response to pathogen-associated signals, the N-terminal part of Nlrp1b is degraded by the proteasome, releasing this form, which polymerizes to form the Nlrp1b inflammasome complex: the Nlrp1b inflammasome complex then directly recruits pro-caspase-1 (proCASP1) and promotes caspase-1 (CASP1) activation, leading to gasdermin-D (GSDMD) cleavage and subsequent pyroptosis. The polypeptide is NACHT, LRR and PYD domains-containing protein 1b allele 1 (Mus musculus (Mouse)).